An 801-amino-acid polypeptide reads, in one-letter code: Bromodomain-containing protein 2 (801 aa).

At Met-1 the chain carries N-acetylmethionine. At Thr-6 the chain carries Phosphothreonine. Ser-37 carries the phosphoserine modification. A disordered region spans residues 53-73 (ALQLTPANPPPPEVSNPKKPG). The 107-residue stretch at 74-180 (RVTNQLQYLH…KIFLQKVASM (107 aa)) folds into the Bromo 1 domain. Asp-112, Tyr-155, Asn-156, Lys-157, Asp-160, and Asp-161 together coordinate a protein. Disordered regions lie at residues 268-349 (PPAQ…LSEQ), 456-647 (EPLE…YDEK), and 737-801 (EKRL…SDSG). Low complexity predominate over residues 285–298 (TTTPTPTAILAPGS). Ser-298, Ser-301, and Ser-305 each carry phosphoserine. The span at 316–332 (MRRESGRPIKPPRKDLP) shows a compositional bias: basic and acidic residues. Positions 344–453 (GKLSEQLKHC…DVFEFRYAKM (110 aa)) constitute a Bromo 2 domain. Residues 481 to 514 (SSEESSSESSSEEEEEEDEEDEEEEESESSDSEE) are compositionally biased toward acidic residues. A compositionally biased stretch (basic residues) spans 544–566 (KPKRKREKKEKKKKRKAEKHRGR). A Nuclear localization signal motif is present at residues 555–559 (KKKRK). Residues 592–612 (GSGGGSAALGPSGFGPSGGSG) are compositionally biased toward gly residues. The NET domain occupies 632–714 (DSEEEEESRP…SCLRKKPRKP (83 aa)). A Phosphoserine modification is found at Ser-633. A compositionally biased stretch (low complexity) spans 763–795 (SSSAQQVAVSRLSASSSSSDSSSSSSSSSSSDT).

Belongs to the BET family. As to quaternary structure, homodimer. Interacts with E2F1. Interacts with (acetylated) STAT3; promoting STAT3 recruitment to chromatin. Interacts with CTCF; promoting BRD2 recruitment to chromatin. (Microbial infection) Interacts with herpes virus 8 protein LANA1.

The protein localises to the nucleus. It localises to the chromosome. Its activity is regulated as follows. Inhibited by JQ1, a thieno-triazolo-1,4-diazepine derivative, which specifically inhibits members of the BET family (BRD2, BRD3 and BRD4). The first bromo domain is inhibited by GSK778 (iBET-BD1), which specifically inhibits the first bromo domain of members of the BET family (BRD2, BRD3 and BRD4). The second bromo domain is inhibited by ABBV-744, which specifically inhibits the second bromo domain of members of the BET family (BRD2, BRD3 and BRD4). The second bromo domain is inhibited by GSK046 (iBET-BD2), which specifically inhibits the second bromo domain of members of the BET family (BRD2, BRD3 and BRD4). Chromatin reader protein that specifically recognizes and binds histone H4 acetylated at 'Lys-5' and 'Lys-12' (H4K5ac and H4K12ac, respectively), thereby controlling gene expression and remodeling chromatin structures. Recruits transcription factors and coactivators to target gene sites, and activates RNA polymerase II machinery for transcriptional elongation. Plays a key role in genome compartmentalization via its association with CTCF and cohesin: recruited to chromatin by CTCF and promotes formation of topologically associating domains (TADs) via its ability to bind acetylated histones, contributing to CTCF boundary formation and enhancer insulation. Also recognizes and binds acetylated non-histone proteins, such as STAT3. Involved in inflammatory response by regulating differentiation of naive CD4(+) T-cells into T-helper Th17: recognizes and binds STAT3 acetylated at 'Lys-87', promoting STAT3 recruitment to chromatin. In addition to acetylated lysines, also recognizes and binds lysine residues on histones that are both methylated and acetylated on the same side chain to form N6-acetyl-N6-methyllysine (Kacme), an epigenetic mark of active chromatin associated with increased transcriptional initiation. Specifically binds histone H4 acetyl-methylated at 'Lys-5' and 'Lys-12' (H4K5acme and H4K12acme, respectively). This chain is Bromodomain-containing protein 2, found in Homo sapiens (Human).